Consider the following 168-residue polypeptide: NADH-quinone oxidoreductase subunit E 2 (168 aa).

Residues C77, C82, C118, and C122 each coordinate [2Fe-2S] cluster.

This sequence belongs to the complex I 24 kDa subunit family. It depends on [2Fe-2S] cluster as a cofactor.

The enzyme catalyses a quinone + NADH + 5 H(+)(in) = a quinol + NAD(+) + 4 H(+)(out). NDH-1 shuttles electrons from NADH, via FMN and iron-sulfur (Fe-S) centers, to quinones in the respiratory chain. The immediate electron acceptor for the enzyme in this species is believed to be ubiquinone. Couples the redox reaction to proton translocation (for every two electrons transferred, four hydrogen ions are translocated across the cytoplasmic membrane), and thus conserves the redox energy in a proton gradient. The chain is NADH-quinone oxidoreductase subunit E 2 (nuoE2) from Rhizobium meliloti (strain 1021) (Ensifer meliloti).